Consider the following 100-residue polypeptide: uncharacterized protein (100 aa).

Belongs to the csb family.

This is an uncharacterized protein from Dictyostelium discoideum (Social amoeba).